We begin with the raw amino-acid sequence, 174 residues long: Protein CURVATURE THYLAKOID 1B, chloroplastic (174 aa).

Residues 1 to 20 are disordered; that stretch reads MASLSVSSSSTIIDSRAPPS. Residues 1–63 constitute a chloroplast transit peptide; that stretch reads MASLSVSSSS…RKIVRNVVTR (63 aa). An N-acetylalanine modification is found at alanine 64. Topologically, residues 64–100 are stromal; the sequence is ATTEVGEAPATTTEAETTELPEIVKTAQEAWEKVDDK. A helical membrane pass occupies residues 101-121; it reads YAIGSLAFAGVVALWGSAGMI. At 122–126 the chain is on the lumenal side; sequence SAIDR. Residues 127–147 form a helical membrane-spanning segment; that stretch reads LPLVPGVLELVGIGYTGWFTY. Topologically, residues 148-174 are stromal; that stretch reads KNLVFKPDREALFEKVKSTYKDILGSS.

It belongs to the CURT family. In terms of assembly, homo- and heterodimers and trimers. Interacts with PSAL. In terms of processing, phosphorylated on either Thr-65 or Thr-66 by a threonine specific thylakoid kinase.

It is found in the plastid. It localises to the chloroplast thylakoid membrane. Determines thylakoid architecture by inducing membrane curvature. The polypeptide is Protein CURVATURE THYLAKOID 1B, chloroplastic (CURT1B) (Arabidopsis thaliana (Mouse-ear cress)).